Consider the following 521-residue polypeptide: Potassium/proton antiporter CemA (521 aa).

Transmembrane regions (helical) follow at residues 68–88 (FVFIIYWSVLECKTSIYLLNI), 294–314 (ALASLQYLGCLILIPWGISFP), 399–419 (ILHLLTDIIYFAIPSASFISG), 446–466 (ILLLTDSCIGFHSPHGWEILI), and 481–501 (IISCFVSTFPVISDTVFKYWI).

Belongs to the CemA family.

It is found in the plastid. The protein localises to the chloroplast inner membrane. It carries out the reaction K(+)(in) + H(+)(out) = K(+)(out) + H(+)(in). Its function is as follows. Contributes to K(+)/H(+) antiport activity by supporting proton efflux to control proton extrusion and homeostasis in chloroplasts in a light-dependent manner to modulate photosynthesis. Prevents excessive induction of non-photochemical quenching (NPQ) under continuous-light conditions. Indirectly promotes efficient inorganic carbon uptake into chloroplasts. The sequence is that of Potassium/proton antiporter CemA from Huperzia lucidula (Shining clubmoss).